A 450-amino-acid chain; its full sequence is Phosphoglucosamine mutase (450 aa).

Serine 102 serves as the catalytic Phosphoserine intermediate. Positions 102, 244, 246, and 248 each coordinate Mg(2+). Serine 102 carries the post-translational modification Phosphoserine.

Belongs to the phosphohexose mutase family. It depends on Mg(2+) as a cofactor. In terms of processing, activated by phosphorylation.

It carries out the reaction alpha-D-glucosamine 1-phosphate = D-glucosamine 6-phosphate. Functionally, catalyzes the conversion of glucosamine-6-phosphate to glucosamine-1-phosphate. The sequence is that of Phosphoglucosamine mutase from Nitratidesulfovibrio vulgaris (strain DSM 19637 / Miyazaki F) (Desulfovibrio vulgaris).